Reading from the N-terminus, the 616-residue chain is Heme A synthase-mitochondrial ferredoxin fusion protein (616 aa).

The transit peptide at 1-45 (MNISRSSGLMRQFLLQPLRKGCDISCLGRSSWRMSRSFSGSSVLN) directs the protein to the mitochondrion. The interval 45 to 465 (NEINLSRTKN…AALSLAQRLH (421 aa)) is heme a synthase cox15-like. The Mitochondrial matrix portion of the chain corresponds to 46–97 (EINLSRTKNLFLNDCKFNKNSFEKFFARRLSNSVAPTPGGILQETEKIPSKK). The chain crosses the membrane as a helical span at residues 98–118 (VAFWLLGSSALVLAIVVVGGI). The Mitochondrial intermembrane portion of the chain corresponds to 119–182 (TRLTESGLSI…NIFFWEWFHR (64 aa)). Residue histidine 181 coordinates heme o. The chain crosses the membrane as a helical span at residues 183-203 (VLGRGIGLTILLPSIYMIVTK). Residues 204-212 (RASPWLSKR) lie on the Mitochondrial matrix side of the membrane. Residues 213–233 (LIGLTGLVGLQGVIGWWMVKS) traverse the membrane as a helical segment. Over 234–254 (GLSEELFSDGSHPRVSHYRLA) the chain is Mitochondrial intermembrane. Residues 255–275 (THLAAAVALYIGLVWTGHGIL) traverse the membrane as a helical segment. Histidine 256 contributes to the heme o binding site. Residues 276–311 (QRHAFLKSMKSGSTSQLTSMVSSVQKMKGFRTSVNS) lie on the Mitochondrial matrix side of the membrane. Residues 312-332 (FVGLVLITLLSGAFVAGLDAG) form a helical membrane-spanning segment. The Mitochondrial intermembrane portion of the chain corresponds to 333 to 380 (MIYCTFPEMGEGRLAPSKSELFDQRFCRKDDKSDLIWRNMIDNPSLVQ). The chain crosses the membrane as a helical span at residues 381–401 (LEHRILAITTFVAACGLFIFS). Histidine 383 contributes to the heme b binding site. Topologically, residues 402 to 417 (RAKRNILPKKIKTSIN) are mitochondrial matrix. Residues 418-438 (VVTGVVTAQATLGIMTLIYVV) traverse the membrane as a helical segment. A topological domain (mitochondrial intermembrane) is located at residue proline 439. Residues 440 to 460 (VPLAALHQAGSLVTLTAALSL) form a helical membrane-spanning segment. Histidine 446 contributes to the heme b binding site. Residues 461–616 (AQRLHPEYAL…RNIRLERPKA (156 aa)) are Mitochondrial matrix-facing. One can recognise a 2Fe-2S ferredoxin-type domain in the interval 502–606 (FRPSFHSEIK…GIRVRIPAQT (105 aa)). Positions 516 to 616 (GTGIKVFFVT…RNIRLERPKA (101 aa)) are mitochondrial ferredoxin yah1-like. The [2Fe-2S] cluster site is built by cysteine 541, cysteine 547, cysteine 550, and cysteine 587.

This sequence in the N-terminal section; belongs to the COX15/CtaA family. Type 2 subfamily. It in the C-terminal section; belongs to the adrenodoxin/putidaredoxin family. Homodimer. Requires heme b as cofactor. The cofactor is [2Fe-2S] cluster. The etp1 preprotein is cleaved into 2 chains after imort into mitochondria. The N-terminal chain containing a heme A synthase cox15-like domain etp1(cd) is a subunit of the membrane-embedded cytochrome c oxidase complex and functions in the respiratory chain. The C-terminal chain containing a ferredoxin yah1-like domain etp1(fd) is released and serves in the matrix as electron transfer protein.

Its subcellular location is the mitochondrion inner membrane. It localises to the mitochondrion matrix. It carries out the reaction Fe(II)-heme o + 2 A + H2O = Fe(II)-heme a + 2 AH2. Its pathway is porphyrin-containing compound metabolism; heme A biosynthesis; heme A from heme O: step 1/1. Functionally, catalyzes the second reaction in the biosynthesis of heme A, a prosthetic group of mitochondrial cytochrome c oxidase (CcO). Heme A is synthesized from heme B by two sequential enzymatic reactions catalyzed by heme O synthase (HOS) and heme A synthase (HAS). HAS catalyzes the conversion of heme O to heme A by two successive hydroxylations of the methyl group at C8, in a reaction that involves matrix ferredoxin and ferredoxin reductase. The first hydroxylation forms heme I, the second hydroxylation results in an unstable dihydroxymethyl group, which spontaneously dehydrates, resulting in the formyl group of heme A. Its function is as follows. Iron-sulfur protein that transfers electrons in a wide variety of metabolic reactions. Involved in heme A biosynthesis and in iron-sulfur cluster assembly. Transfers electrons from adrenodoxin reductase arh1 to heme A synthase etp1(cd), a heme protein that catalyzes the conversion of heme O to heme A. Required for the de novo synthesis of Fe-S clusters on iron sulfur cluster assembly protein isu1. Interact in its reduced state with isu1 to productively deliver electrons for Fe-S cluster synthesis. Essential for coenzyme Q biosynthesis. May transfer the electrons required for the hydroxylation reaction performed by coq6. This Schizosaccharomyces pombe (strain 972 / ATCC 24843) (Fission yeast) protein is Heme A synthase-mitochondrial ferredoxin fusion protein.